The chain runs to 872 residues: Leucine--tRNA ligase (872 aa).

The 'HIGH' region signature appears at 42 to 52 (PYPSGNLHMGH). The 'KMSKS' region motif lies at 631–635 (KMSKS). K634 lines the ATP pocket.

The protein belongs to the class-I aminoacyl-tRNA synthetase family.

It localises to the cytoplasm. It carries out the reaction tRNA(Leu) + L-leucine + ATP = L-leucyl-tRNA(Leu) + AMP + diphosphate. The chain is Leucine--tRNA ligase from Blochmanniella pennsylvanica (strain BPEN).